A 395-amino-acid chain; its full sequence is S-adenosylmethionine synthase (395 aa).

His-14 is a binding site for ATP. Asp-16 is a Mg(2+) binding site. Glu-42 contributes to the K(+) binding site. L-methionine is bound by residues Glu-55 and Gln-98. Residues 98-108 (QSPDIAMGVDK) are flexible loop. Residues 175-177 (DGK), 242-243 (RF), Asp-251, 257-258 (RK), Ala-274, and Lys-278 contribute to the ATP site. Position 251 (Asp-251) interacts with L-methionine. Lys-282 is a binding site for L-methionine.

It belongs to the AdoMet synthase family. As to quaternary structure, homotetramer; dimer of dimers. Mg(2+) is required as a cofactor. Requires K(+) as cofactor.

It is found in the cytoplasm. It catalyses the reaction L-methionine + ATP + H2O = S-adenosyl-L-methionine + phosphate + diphosphate. It functions in the pathway amino-acid biosynthesis; S-adenosyl-L-methionine biosynthesis; S-adenosyl-L-methionine from L-methionine: step 1/1. Catalyzes the formation of S-adenosylmethionine (AdoMet) from methionine and ATP. The overall synthetic reaction is composed of two sequential steps, AdoMet formation and the subsequent tripolyphosphate hydrolysis which occurs prior to release of AdoMet from the enzyme. The sequence is that of S-adenosylmethionine synthase from Thermosipho melanesiensis (strain DSM 12029 / CIP 104789 / BI429).